Consider the following 1470-residue polypeptide: Gag-Pol polyprotein (1470 aa).

Residue glycine 2 is the site of N-myristoyl glycine; by host attachment. The Nuclear export signal signature appears at 16–22; the sequence is FEHIRLR. The short motif at 26 to 32 is the Nuclear localization signal element; sequence KKKYQIK. The tract at residues 117–144 is disordered; it reads AVTPPGGQQKNNTGGTATPGGSQNFPAQ. Over residues 122–144 the composition is skewed to polar residues; it reads GGQQKNNTGGTATPGGSQNFPAQ. CCHC-type zinc fingers lie at residues 398-415 and 419-436; these read PKCYNCGKFGHMQRQCPE and IKCLKCGKPGHLAKDCRG. The disordered stretch occupies residues 479-504; the sequence is KEAPAAVCRERETNEKSEQKPPSEQS. A compositionally biased stretch (basic and acidic residues) spans 486-504; sequence CRERETNEKSEQKPPSEQS. In terms of domain architecture, Peptidase A2 spans 531 to 602; it reads VKALLDTGAD…TPINIIGRNF (72 aa). Aspartate 536 functions as the For protease activity; shared with dimeric partner in the catalytic mechanism. The Reverse transcriptase domain occupies 658-848; the sequence is EGKLSRVGGD…PPFEWMGYKL (191 aa). Positions 724, 799, and 800 each coordinate Mg(2+). Residues 841 to 849 form an RT 'primer grip' region; that stretch reads FEWMGYKLW. A Tryptophan repeat motif motif is present at residues 1011–1027; it reads WEQWWADYWQVSWIPEW. Residues 1047 to 1170 enclose the RNase H type-1 domain; the sequence is IPGEDVYYVD…IDKLVSKGVR (124 aa). Aspartate 1056, glutamate 1091, aspartate 1111, and aspartate 1162 together coordinate Mg(2+). The segment at 1176–1217 adopts an Integrase-type zinc-finger fold; the sequence is GRIEEAQEEHDRYHSNWRNLADTFGLPQIVAKEIVAMCPKCQ. Zn(2+) contacts are provided by histidine 1185, histidine 1189, cysteine 1213, and cysteine 1216. The 151-residue stretch at 1227–1377 folds into the Integrase catalytic domain; it reads VDASPGVWQM…TAAERLINMI (151 aa). Aspartate 1237 and aspartate 1289 together coordinate Mg(2+). The segment at residues 1396 to 1443 is a DNA-binding region (integrase-type); it reads FRVYYREGRDPVWKGPARLIWKGEGAVVLKEGEELKVVPRRKAKIIKD. The disordered stretch occupies residues 1451 to 1470; it reads GDETHLEGAGGSDHQMAGDS.

Homotrimer. Interacts with gp41 (via C-terminus). In terms of assembly, homodimer. The active site consists of two apposed aspartic acid residues. As to quaternary structure, heterodimer of p66 RT and p51 RT (RT p66/p51). Heterodimerization of RT is essential for DNA polymerase activity. Despite the sequence identities, p66 RT and p51 RT have distinct folding. Homotetramer; may further associate as a homohexadecamer. It depends on Mg(2+) as a cofactor. Specific enzymatic cleavages by the viral protease yield mature proteins. The protease is released by autocatalytic cleavage. The polyprotein is cleaved during and after budding, this process is termed maturation. Proteolytic cleavage of p66 RT removes the RNase H domain to yield the p51 RT subunit. In terms of processing, capsid protein p24 is phosphorylated.

It localises to the virion. Its subcellular location is the host nucleus. It is found in the host cytoplasm. The protein localises to the host cell membrane. The catalysed reaction is Specific for a P1 residue that is hydrophobic, and P1' variable, but often Pro.. It carries out the reaction Endohydrolysis of RNA in RNA/DNA hybrids. Three different cleavage modes: 1. sequence-specific internal cleavage of RNA. Human immunodeficiency virus type 1 and Moloney murine leukemia virus enzymes prefer to cleave the RNA strand one nucleotide away from the RNA-DNA junction. 2. RNA 5'-end directed cleavage 13-19 nucleotides from the RNA end. 3. DNA 3'-end directed cleavage 15-20 nucleotides away from the primer terminus.. It catalyses the reaction 3'-end directed exonucleolytic cleavage of viral RNA-DNA hybrid.. The enzyme catalyses DNA(n) + a 2'-deoxyribonucleoside 5'-triphosphate = DNA(n+1) + diphosphate. The viral protease is inhibited by many synthetic protease inhibitors (PIs), such as amprenavir, atazanavir, indinavir, loprinavir, nelfinavir, ritonavir and saquinavir. RT can be inhibited either by nucleoside RT inhibitors (NRTIs) or by non nucleoside RT inhibitors (NNRTIs). NRTIs act as chain terminators, whereas NNRTIs inhibit DNA polymerization by binding a small hydrophobic pocket near the RT active site and inducing an allosteric change in this region. Classical NRTIs are abacavir, adefovir (PMEA), didanosine (ddI), lamivudine (3TC), stavudine (d4T), tenofovir (PMPA), zalcitabine (ddC), and zidovudine (AZT). Classical NNRTIs are atevirdine (BHAP U-87201E), delavirdine, efavirenz (DMP-266), emivirine (I-EBU), and nevirapine (BI-RG-587). The tritherapies used as a basic effective treatment of AIDS associate two NRTIs and one NNRTI. Use of protease inhibitors in tritherapy regimens permit more ambitious therapeutic strategies. In terms of biological role, gag-Pol polyprotein and Gag polyprotein may regulate their own translation, by the binding genomic RNA in the 5'-UTR. At low concentration, Gag-Pol and Gag would promote translation, whereas at high concentration, the polyproteins encapsidate genomic RNA and then shut off translation. Its function is as follows. Matrix protein p17 has two main functions: in infected cell, it targets Gag and Gag-pol polyproteins to the plasma membrane via a multipartite membrane-binding signal, that includes its myristointegration complex. The myristoylation signal and the NLS exert conflicting influences its subcellular localization. The key regulation of these motifs might be phosphorylation of a portion of MA molecules on the C-terminal tyrosine at the time of virus maturation, by virion-associated cellular tyrosine kinase. Implicated in the release from host cell mediated by Vpu. Capsid protein p24 forms the conical core that encapsulates the genomic RNA-nucleocapsid complex in the virion. The core is constituted by capsid protein hexamer subunits. The core is disassembled soon after virion entry. Interaction with host PPIA/CYPA protects the virus from restriction by host TRIM5-alpha and from an unknown antiviral activity in host cells. This capsid restriction by TRIM5 is one of the factors which restricts SIV to the simian species. Functionally, nucleocapsid protein p7 encapsulates and protects viral dimeric unspliced (genomic) RNA. Binds these RNAs through its zinc fingers. Facilitates rearangement of nucleic acid secondary structure during retrotranscription of genomic RNA. This capability is referred to as nucleic acid chaperone activity. In terms of biological role, the aspartyl protease mediates proteolytic cleavages of Gag and Gag-Pol polyproteins during or shortly after the release of the virion from the plasma membrane. Cleavages take place as an ordered, step-wise cascade to yield mature proteins. This process is called maturation. Displays maximal activity during the budding process just prior to particle release from the cell. Also cleaves Nef and Vif, probably concomitantly with viral structural proteins on maturation of virus particles. Hydrolyzes host EIF4GI and PABP1 in order to shut off the capped cellular mRNA translation. The resulting inhibition of cellular protein synthesis serves to ensure maximal viral gene expression and to evade host immune response. Its function is as follows. Reverse transcriptase/ribonuclease H (RT) is a multifunctional enzyme that converts the viral dimeric RNA genome into dsDNA in the cytoplasm, shortly after virus entry into the cell. This enzyme displays a DNA polymerase activity that can copy either DNA or RNA templates, and a ribonuclease H (RNase H) activity that cleaves the RNA strand of RNA-DNA heteroduplexes in a partially processive 3' to 5' endonucleasic mode. Conversion of viral genomic RNA into dsDNA requires many steps. A tRNA binds to the primer-binding site (PBS) situated at the 5'-end of the viral RNA. RT uses the 3' end of the tRNA primer to perform a short round of RNA-dependent minus-strand DNA synthesis. The reading proceeds through the U5 region and ends after the repeated (R) region which is present at both ends of viral RNA. The portion of the RNA-DNA heteroduplex is digested by the RNase H, resulting in a ssDNA product attached to the tRNA primer. This ssDNA/tRNA hybridizes with the identical R region situated at the 3' end of viral RNA. This template exchange, known as minus-strand DNA strong stop transfer, can be either intra- or intermolecular. RT uses the 3' end of this newly synthesized short ssDNA to perform the RNA-dependent minus-strand DNA synthesis of the whole template. RNase H digests the RNA template except for two polypurine tracts (PPTs) situated at the 5'-end and near the center of the genome. It is not clear if both polymerase and RNase H activities are simultaneous. RNase H can probably proceed both in a polymerase-dependent (RNA cut into small fragments by the same RT performing DNA synthesis) and a polymerase-independent mode (cleavage of remaining RNA fragments by free RTs). Secondly, RT performs DNA-directed plus-strand DNA synthesis using the PPTs that have not been removed by RNase H as primers. PPTs and tRNA primers are then removed by RNase H. The 3' and 5' ssDNA PBS regions hybridize to form a circular dsDNA intermediate. Strand displacement synthesis by RT to the PBS and PPT ends produces a blunt ended, linear dsDNA copy of the viral genome that includes long terminal repeats (LTRs) at both ends. Integrase catalyzes viral DNA integration into the host chromosome, by performing a series of DNA cutting and joining reactions. This enzyme activity takes place after virion entry into a cell and reverse transcription of the RNA genome in dsDNA. The first step in the integration process is 3' processing. This step requires a complex comprising the viral genome, matrix protein, Vpr and integrase. This complex is called the pre-integration complex (PIC). The integrase protein removes 2 nucleotides from each 3' end of the viral DNA, leaving recessed CA OH's at the 3' ends. In the second step, the PIC enters cell nucleus. This process is mediated through integrase and Vpr proteins, and allows the virus to infect a non dividing cell. This ability to enter the nucleus is specific of lentiviruses, other retroviruses cannot and rely on cell division to access cell chromosomes. In the third step, termed strand transfer, the integrase protein joins the previously processed 3' ends to the 5' ends of strands of target cellular DNA at the site of integration. The 5'-ends are produced by integrase-catalyzed staggered cuts, 5 bp apart. A Y-shaped, gapped, recombination intermediate results, with the 5'-ends of the viral DNA strands and the 3' ends of target DNA strands remaining unjoined, flanking a gap of 5 bp. The last step is viral DNA integration into host chromosome. This involves host DNA repair synthesis in which the 5 bp gaps between the unjoined strands are filled in and then ligated. Since this process occurs at both cuts flanking the SIV genome, a 5 bp duplication of host DNA is produced at the ends of SIV integration. Alternatively, Integrase may catalyze the excision of viral DNA just after strand transfer, this is termed disintegration. The chain is Gag-Pol polyprotein (gag-pol) from Cercopithecidae (Old World monkeys).